The primary structure comprises 125 residues: Large ribosomal subunit protein bL12 (125 aa).

This sequence belongs to the bacterial ribosomal protein bL12 family. In terms of assembly, homodimer. Part of the ribosomal stalk of the 50S ribosomal subunit. Forms a multimeric L10(L12)X complex, where L10 forms an elongated spine to which 2 to 4 L12 dimers bind in a sequential fashion. Binds GTP-bound translation factors.

Functionally, forms part of the ribosomal stalk which helps the ribosome interact with GTP-bound translation factors. Is thus essential for accurate translation. The polypeptide is Large ribosomal subunit protein bL12 (Polaromonas sp. (strain JS666 / ATCC BAA-500)).